Reading from the N-terminus, the 598-residue chain is Probable translation initiation factor IF-2 (598 aa).

The 221-residue stretch at 3–223 (LRCPIVSVLG…ISGLAQRFME (221 aa)) folds into the tr-type G domain. Residues 12–19 (GHVDHGKT) are G1. A GTP-binding site is contributed by 12–19 (GHVDHGKT). The interval 37-41 (GITQH) is G2. Residues 76–79 (DTPG) form a G3 region. Residues 76 to 80 (DTPGH) and 130 to 133 (NKID) contribute to the GTP site. Residues 130 to 133 (NKID) form a G4 region. Residues 200 to 202 (SAM) form a G5 region.

This sequence belongs to the TRAFAC class translation factor GTPase superfamily. Classic translation factor GTPase family. IF-2 subfamily.

Its function is as follows. Function in general translation initiation by promoting the binding of the formylmethionine-tRNA to ribosomes. Seems to function along with eIF-2. This is Probable translation initiation factor IF-2 from Methanococcus aeolicus (strain ATCC BAA-1280 / DSM 17508 / OCM 812 / Nankai-3).